The following is a 437-amino-acid chain: Adenylosuccinate synthetase (437 aa).

GTP contacts are provided by residues 12–18 and 40–42; these read GDEGKGK and GHT. D13 serves as the catalytic Proton acceptor. Mg(2+) is bound by residues D13 and G40. Residues 13-16, 38-41, T128, R142, Q223, T238, and R302 each bind IMP; these read DEGK and NAGH. H41 (proton donor) is an active-site residue. Residue 298 to 304 coordinates substrate; sequence TTTGRRR. Residues R304, 330–332, and 412–414 each bind GTP; these read KLD and SLG.

It belongs to the adenylosuccinate synthetase family. As to quaternary structure, homodimer. Mg(2+) serves as cofactor.

It localises to the cytoplasm. The enzyme catalyses IMP + L-aspartate + GTP = N(6)-(1,2-dicarboxyethyl)-AMP + GDP + phosphate + 2 H(+). It participates in purine metabolism; AMP biosynthesis via de novo pathway; AMP from IMP: step 1/2. Functionally, plays an important role in the de novo pathway of purine nucleotide biosynthesis. Catalyzes the first committed step in the biosynthesis of AMP from IMP. The protein is Adenylosuccinate synthetase of Prochlorococcus marinus (strain NATL1A).